The chain runs to 162 residues: Endoribonuclease YbeY (162 aa).

3 residues coordinate Zn(2+): His-117, His-121, and His-127.

The protein belongs to the endoribonuclease YbeY family. The cofactor is Zn(2+).

The protein localises to the cytoplasm. In terms of biological role, single strand-specific metallo-endoribonuclease involved in late-stage 70S ribosome quality control and in maturation of the 3' terminus of the 16S rRNA. This chain is Endoribonuclease YbeY, found in Francisella tularensis subsp. novicida (strain U112).